The primary structure comprises 253 residues: Triosephosphate isomerase (253 aa).

Residue 12–14 (NWK) participates in substrate binding. H100 serves as the catalytic Electrophile. E170 serves as the catalytic Proton acceptor. Residues G176, S215, and 236–237 (GG) contribute to the substrate site.

This sequence belongs to the triosephosphate isomerase family. As to quaternary structure, homodimer.

The protein resides in the cytoplasm. The enzyme catalyses D-glyceraldehyde 3-phosphate = dihydroxyacetone phosphate. It participates in carbohydrate biosynthesis; gluconeogenesis. Its pathway is carbohydrate degradation; glycolysis; D-glyceraldehyde 3-phosphate from glycerone phosphate: step 1/1. In terms of biological role, involved in the gluconeogenesis. Catalyzes stereospecifically the conversion of dihydroxyacetone phosphate (DHAP) to D-glyceraldehyde-3-phosphate (G3P). The polypeptide is Triosephosphate isomerase (Rhodopseudomonas palustris (strain BisA53)).